Reading from the N-terminus, the 307-residue chain is F-box protein PP2-B7 (307 aa).

Residues 37–83 enclose the F-box domain; it reads PLSLGDLPEECISLIISFTSPRDACVFALVSKTFESAVQSDIVWEKF.

The sequence is that of F-box protein PP2-B7 (PP2B7) from Arabidopsis thaliana (Mouse-ear cress).